A 471-amino-acid polypeptide reads, in one-letter code: 3-isopropylmalate dehydratase large subunit (471 aa).

The [4Fe-4S] cluster site is built by Cys-347, Cys-407, and Cys-410.

Belongs to the aconitase/IPM isomerase family. LeuC type 1 subfamily. In terms of assembly, heterodimer of LeuC and LeuD. [4Fe-4S] cluster is required as a cofactor.

The catalysed reaction is (2R,3S)-3-isopropylmalate = (2S)-2-isopropylmalate. It participates in amino-acid biosynthesis; L-leucine biosynthesis; L-leucine from 3-methyl-2-oxobutanoate: step 2/4. Its function is as follows. Catalyzes the isomerization between 2-isopropylmalate and 3-isopropylmalate, via the formation of 2-isopropylmaleate. This chain is 3-isopropylmalate dehydratase large subunit, found in Anoxybacillus flavithermus (strain DSM 21510 / WK1).